Consider the following 297-residue polypeptide: Probable endonuclease 4 (297 aa).

Zn(2+) is bound by residues His68, His109, Glu144, Asp178, His181, His213, Asp226, His228, and Glu258.

The protein belongs to the AP endonuclease 2 family. Zn(2+) is required as a cofactor.

It catalyses the reaction Endonucleolytic cleavage to 5'-phosphooligonucleotide end-products.. In terms of biological role, endonuclease IV plays a role in DNA repair. It cleaves phosphodiester bonds at apurinic or apyrimidinic (AP) sites, generating a 3'-hydroxyl group and a 5'-terminal sugar phosphate. The chain is Probable endonuclease 4 from Enterococcus faecalis (strain ATCC 700802 / V583).